The following is a 241-amino-acid chain: Putative integrase ORF241 (241 aa).

A Tyr recombinase domain is found at 82–241 (VEAKKTLVSA…AIEMLRKLAD (160 aa)). Residues arginine 119, lysine 144, histidine 191, arginine 194, and histidine 217 contribute to the active site. Residue tyrosine 226 is the O-(3'-phospho-DNA)-tyrosine intermediate of the active site.

The protein belongs to the 'phage' integrase family.

This protein may encode an integrase, which is necessary for integration of the viral DNA into host genome. This is Putative integrase ORF241 from Acidianus convivator (ATV).